The following is a 275-amino-acid chain: MAIYAVGDLQGCYREFRELLDLVRFDETKDKLWLVGDLVNRGPDSLSVLRFVKELNDSAIMVLGNHDLHLLLVAEGCAELSRSDTLQNILDAPDRDELLDWLRRQKLLHVDGNYVMVHAGLLPSWSIEQAQVLAALVESALRGSEFHEFCRQMYGNRPDHWNETLHGYERLRVIVNAMTRMRVCTPHGRMDFAHKGSVKDIPPGYLPWFDVPERASRKATVICGHWSALGLEIRANLMALDTGCLWGGSLTAVRLEDRKVFQTECGAGGATRHWQ.

Belongs to the Ap4A hydrolase family.

It catalyses the reaction P(1),P(4)-bis(5'-adenosyl) tetraphosphate + H2O = 2 ADP + 2 H(+). Hydrolyzes diadenosine 5',5'''-P1,P4-tetraphosphate to yield ADP. This Nitrosospira multiformis (strain ATCC 25196 / NCIMB 11849 / C 71) protein is Bis(5'-nucleosyl)-tetraphosphatase, symmetrical.